Here is a 403-residue protein sequence, read N- to C-terminus: Histidine decarboxylase (403 aa).

His120 contacts substrate. The residue at position 233 (Lys233) is an N6-(pyridoxal phosphate)lysine.

This sequence belongs to the group II decarboxylase family. In terms of assembly, homotetramer. Pyridoxal 5'-phosphate is required as a cofactor.

It carries out the reaction L-histidine + H(+) = histamine + CO2. The chain is Histidine decarboxylase from Pseudomonas entomophila (strain L48).